A 360-amino-acid polypeptide reads, in one-letter code: Phosphate acyltransferase (360 aa).

Residues 296 to 305 (STLRREHLDR) are compositionally biased toward basic and acidic residues. Residues 296-360 (STLRREHLDR…LRTAEPPGSL (65 aa)) form a disordered region. Basic residues predominate over residues 314-333 (PRQRRRPRRQKRRAACRPRP). Positions 334–350 (RSAAGRAPGSGVRGAAG) are enriched in low complexity.

Belongs to the PlsX family. In terms of assembly, homodimer. Probably interacts with PlsY.

It localises to the cytoplasm. The enzyme catalyses a fatty acyl-[ACP] + phosphate = an acyl phosphate + holo-[ACP]. It participates in lipid metabolism; phospholipid metabolism. Its function is as follows. Catalyzes the reversible formation of acyl-phosphate (acyl-PO(4)) from acyl-[acyl-carrier-protein] (acyl-ACP). This enzyme utilizes acyl-ACP as fatty acyl donor, but not acyl-CoA. The sequence is that of Phosphate acyltransferase from Deinococcus radiodurans (strain ATCC 13939 / DSM 20539 / JCM 16871 / CCUG 27074 / LMG 4051 / NBRC 15346 / NCIMB 9279 / VKM B-1422 / R1).